The primary structure comprises 416 residues: Multifunctional CCA protein (416 aa).

2 residues coordinate ATP: Gly8 and Arg11. Gly8 and Arg11 together coordinate CTP. Residues Asp21 and Asp23 each contribute to the Mg(2+) site. 3 residues coordinate ATP: Arg91, Arg137, and Arg140. Arg91, Arg137, and Arg140 together coordinate CTP. The region spanning 228 to 329 (TGLHTMMVLA…IKLFDKADFW (102 aa)) is the HD domain.

This sequence belongs to the tRNA nucleotidyltransferase/poly(A) polymerase family. Bacterial CCA-adding enzyme type 1 subfamily. Monomer. Can also form homodimers and oligomers. Requires Mg(2+) as cofactor. It depends on Ni(2+) as a cofactor.

It carries out the reaction a tRNA precursor + 2 CTP + ATP = a tRNA with a 3' CCA end + 3 diphosphate. The enzyme catalyses a tRNA with a 3' CCA end + 2 CTP + ATP = a tRNA with a 3' CCACCA end + 3 diphosphate. Functionally, catalyzes the addition and repair of the essential 3'-terminal CCA sequence in tRNAs without using a nucleic acid template. Adds these three nucleotides in the order of C, C, and A to the tRNA nucleotide-73, using CTP and ATP as substrates and producing inorganic pyrophosphate. tRNA 3'-terminal CCA addition is required both for tRNA processing and repair. Also involved in tRNA surveillance by mediating tandem CCA addition to generate a CCACCA at the 3' terminus of unstable tRNAs. While stable tRNAs receive only 3'-terminal CCA, unstable tRNAs are marked with CCACCA and rapidly degraded. The protein is Multifunctional CCA protein of Shewanella sp. (strain MR-4).